The sequence spans 462 residues: Retinoic acid receptor alpha (462 aa).

A modulating region spans residues 1 to 87; the sequence is MASNSSSCPT…PPPLPRIYKP (87 aa). Residues 52 to 64 show a composition bias toward polar residues; that stretch reads GYSTPSPATIETQ. The interval 52 to 77 is disordered; sequence GYSTPSPATIETQSSSSEEIVPSPPS. Position 77 is a phosphoserine; by CDK7 (S77). NR C4-type zinc fingers lie at residues 88-108 and 124-148; these read CFVCQDKSSGYHYGVSACEGC and CHRDKNCIINKVTRNRCQYCRLQKC. The segment at residues 88–153 is a DNA-binding region (nuclear receptor); it reads CFVCQDKSSG…RLQKCFEVGM (66 aa). S96 is modified (phosphoserine; by PKB/AKT1). Positions 154–182 are hinge; it reads SKESVRNDRNKKKKEVPKPECSESYTLTP. Residues K166 and K171 each participate in a glycyl lysine isopeptide (Lys-Gly) (interchain with G-Cter in SUMO) cross-link. Positions 183–417 constitute an NR LBD domain; sequence EVGELIEKVR…PLIQEMLENS (235 aa). Position 219 is a phosphoserine; by PKA (S219). An all-trans-retinoate-binding site is contributed by C235. Positions 254–258 match the UBR5-degron motif; sequence IADQI. Position 287 (S287) interacts with all-trans-retinoate. S369 carries the post-translational modification Phosphoserine; by PKA. K399 is covalently cross-linked (Glycyl lysine isopeptide (Lys-Gly) (interchain with G-Cter in SUMO)). The segment at 404-419 is required for binding corepressor NCOR1; the sequence is GSMPPLIQEMLENSEG. A 9aaTAD motif is present at residues 408-416; it reads PLIQEMLEN. The tract at residues 419–462 is disordered; the sequence is GLDTLSGQPGGGGRDGGGLAPPPGSCSPSLSPSSNRSSPATHSP. The span at 426–437 shows a compositional bias: gly residues; the sequence is QPGGGGRDGGGL. Residues 444–462 show a composition bias toward low complexity; that stretch reads CSPSLSPSSNRSSPATHSP.

This sequence belongs to the nuclear hormone receptor family. NR1 subfamily. As to quaternary structure, heterodimer; with RXRA (via C-terminus); association with RXRA is enhanced by pulsatile shear stress. Binds DNA preferentially as a heterodimer. RXRA serves as enhancer to induce RARA binding to RARE. Interacts with RXRG. Interacts with coactivators NCOA3 and NCOA6. Interacts with NCOA7; the interaction requires ligand-binding. Interacts (via the ligand-binding domain) with PRAME; the interaction is ligand (retinoic acid)-dependent. Interacts with AKT1; the interaction phosphorylates RARA and represses transactivation. Interacts with PRKAR1A; the interaction negatively regulates RARA transcriptional activity. Interacts with NCOR1 and NCOR2. Interacts with PRMT2. Interacts with LRIF1. Interacts with ASXL1 and NCOA1. Interacts with ACTN4. In a complex with HDAC3, HDAC5 and HDAC7; the HDACs serve as corepressors of RARA, causing its deacetylation and inhibition of RARE DNA element binding; association with HDAC3, HDAC5 and HDAC7 is increased upon oscillatory shear stress. Interacts with CDK7. In the absence of hormonal ligand, interacts with TACC1. Phosphorylated on serine and threonine residues. Phosphorylation does not change during cell cycle. Phosphorylation on Ser-77 is crucial for transcriptional activity. Phosphorylation by AKT1 is required for the repressor activity but has no effect on DNA binding, protein stability nor subcellular localization. Phosphorylated by PKA in vitro. This phosphorylation on Ser-219 and Ser-369 is critical for ligand binding, nuclear localization and transcriptional activity in response to FSH signaling. In terms of processing, sumoylated with SUMO2, mainly on Lys-399 which is also required for SENP6 binding. On all-trans retinoic acid (ATRA) binding, a conformational change may occur that allows sumoylation on two additional site, Lys-166 and Lys-171. Probably desumoylated by SENP6. Sumoylation levels determine nuclear localization and regulate ATRA-mediated transcriptional activity. Post-translationally, trimethylation enhances heterodimerization with RXRA and positively modulates the transcriptional activation. Ubiquitinated by UBR5, leading to its degradation: UBR5 specifically recognizes and binds ligand-bound RARA when it is not associated with coactivators (NCOAs). In presence of NCOAs, the UBR5-degron is not accessible, preventing its ubiquitination and degradation. In terms of processing, acetylated; acetylation is increased upon pulsatile shear stress and decreased upon oscillatory shear stress. In terms of tissue distribution, expressed in monocytes.

The protein resides in the nucleus. Its subcellular location is the cytoplasm. In terms of biological role, receptor for retinoic acid. Retinoic acid receptors bind as heterodimers to their target response elements in response to their ligands, all-trans or 9-cis retinoic acid, and regulate gene expression in various biological processes. The RXR/RAR heterodimers bind to the retinoic acid response elements (RARE) composed of tandem 5'-AGGTCA-3' sites known as DR1-DR5. In the absence of ligand, the RXR-RAR heterodimers associate with a multiprotein complex containing transcription corepressors that induce histone deacetylation, chromatin condensation and transcriptional suppression. On ligand binding, the corepressors dissociate from the receptors and associate with the coactivators leading to transcriptional activation. Formation of a complex with histone deacetylases might lead to inhibition of RARE DNA element binding and to transcriptional repression. Transcriptional activation and RARE DNA element binding might be supported by the transcription factor KLF2. RARA plays an essential role in the regulation of retinoic acid-induced germ cell development during spermatogenesis. Has a role in the survival of early spermatocytes at the beginning prophase of meiosis. In Sertoli cells, may promote the survival and development of early meiotic prophase spermatocytes. In concert with RARG, required for skeletal growth, matrix homeostasis and growth plate function. Together with RXRA, positively regulates microRNA-10a expression, thereby inhibiting the GATA6/VCAM1 signaling response to pulsatile shear stress in vascular endothelial cells. In association with HDAC3, HDAC5 and HDAC7 corepressors, plays a role in the repression of microRNA-10a and thereby promotes the inflammatory response. The chain is Retinoic acid receptor alpha (RARA) from Homo sapiens (Human).